A 456-amino-acid polypeptide reads, in one-letter code: Armadillo repeat-containing X-linked protein 1 (456 aa).

Topologically, residues 1 to 6 are mitochondrial intermembrane; that stretch reads MGRTRE. 2 mitochondrion outer membrane (MOM)-targeting sequence regions span residues 1–6 and 26–36; these read MGRTRE and RLTWGKDENEK. The chain crosses the membrane as a helical; Signal-anchor span at residues 7-29; sequence AGCVAAGMVIGAGACYCVYRLTW. Residues 30–456 lie on the Cytoplasmic side of the membrane; the sequence is GKDENEKLWD…VKVLKVLTKL (427 aa). Disordered regions lie at residues 37 to 106 and 139 to 186; these read LWDE…SGGG and RTLT…APAT. Acidic residues predominate over residues 38–50; the sequence is WDEEEEEEEEEEE. 2 stretches are compositionally biased toward basic and acidic residues: residues 51 to 62 and 72 to 81; these read KSCSDKTEKELK and KPQDDSKSKV. Positions 162 to 180 are enriched in basic residues; sequence SRARNRTSGKVKRKNRSKS. 4 ARM repeats span residues 198–238, 240–279, 361–401, and 418–456; these read PYKI…NNAA, SFNQNAIRELGGVPIIAKLIKTRDPIIREKTYNALNNLSV, PAMT…NIND, and SSLFFLFKESGVCVKKIKALASHKDLVVKVKVLKVLTKL.

Belongs to the eutherian X-chromosome-specific Armcx family. Interacts with MIRO1. In terms of tissue distribution, widely expressed in the adult nervous tissue, especially in the forebrain, including the cerebral cortex, hippocampus and thalamus.

Its subcellular location is the mitochondrion. It localises to the mitochondrion outer membrane. Functionally, regulates mitochondrial transport during axon regeneration. Increases the proportion of motile mitochondria by recruiting stationary mitochondria into the motile pool. Enhances mitochondria movement and neurite growth in both adult axons and embryonic neurons. Promotes neuronal survival and axon regeneration after nerve injury. May link mitochondria to the Trak1-kinesin motor complex via its interaction with Miro1. This chain is Armadillo repeat-containing X-linked protein 1 (Armcx1), found in Mus musculus (Mouse).